We begin with the raw amino-acid sequence, 355 residues long: Phosphate acyltransferase (355 aa).

The protein belongs to the PlsX family. Homodimer. Probably interacts with PlsY.

The protein localises to the cytoplasm. The catalysed reaction is a fatty acyl-[ACP] + phosphate = an acyl phosphate + holo-[ACP]. It functions in the pathway lipid metabolism; phospholipid metabolism. Its function is as follows. Catalyzes the reversible formation of acyl-phosphate (acyl-PO(4)) from acyl-[acyl-carrier-protein] (acyl-ACP). This enzyme utilizes acyl-ACP as fatty acyl donor, but not acyl-CoA. The polypeptide is Phosphate acyltransferase (Azorhizobium caulinodans (strain ATCC 43989 / DSM 5975 / JCM 20966 / LMG 6465 / NBRC 14845 / NCIMB 13405 / ORS 571)).